The primary structure comprises 318 residues: Aquaporin-1 (318 aa).

A compositionally biased stretch (polar residues) spans 1 to 16 (MVQFGSRANTNMTGLP). Positions 1–27 (MVQFGSRANTNMTGLPTEQAVEDRRVG) are disordered. Topologically, residues 1–36 (MVQFGSRANTNMTGLPTEQAVEDRRVGNPKRDRMRN) are cytoplasmic. A helical membrane pass occupies residues 37–57 (ALVIVLGEFCGTFMFLLLSFI). The Extracellular segment spans residues 58-77 (GAQTALVTNSPSDAGSPLLP). Residues 78-98 (FSLMYIAASFGTALAVNVWIF) traverse the membrane as a helical segment. The Cytoplasmic segment spans residues 99–108 (YRVSGGMFNP). An NPA 1 motif is present at residues 107 to 109 (NPA). Residues 109–129 (AVTLGLVLVGAVTPIHALLII) traverse the membrane as a helical segment. Residues 130–165 (PTQLVAAITAAGITDALLPGKLLVTNALGNGTSVAQ) are Extracellular-facing. Asparagine 159 carries an N-linked (GlcNAc...) asparagine glycan. A helical transmembrane segment spans residues 166–186 (GVFIEMFLTSQLVLTVYFLAV). Residues 187–193 (EKHRSTH) are Cytoplasmic-facing. Residues 194–214 (LAPIGIGISVFIAHICATNWT) form a helical membrane-spanning segment. At 215–236 (GTSINPARSFGPSVVAGFHGYD) the chain is on the extracellular side. Residues 219–221 (NPA) carry the NPA 2 motif. A helical membrane pass occupies residues 237-257 (WIYYIGPFMGSLLAFGCYKIF). Residues 258 to 318 (KVLEYQTANP…NDSVIDDQMV (61 aa)) are Cytoplasmic-facing. The segment at 268-318 (GQDDDNLDRSGHHHFFGHRKEPMPHTHTDNIEPKDHGVPQRNDSVIDDQMV) is disordered. Basic and acidic residues predominate over residues 285–305 (HRKEPMPHTHTDNIEPKDHGV).

This sequence belongs to the MIP/aquaporin (TC 1.A.8) family.

It localises to the nucleus membrane. It catalyses the reaction H2O(in) = H2O(out). Functionally, probable water channel involved in responses to changes in environmental conditions and conidiation. Involved in responses to hyperosmotic conditions, oxidative stress and cell wall destabilization. Also required for proper transcriptional activation of genes involved in aurofusarin biosynthesis. Not involved in pathogenicity, but negatively regulates deoxynivalenol (DON) production. The chain is Aquaporin-1 from Gibberella zeae (strain ATCC MYA-4620 / CBS 123657 / FGSC 9075 / NRRL 31084 / PH-1) (Wheat head blight fungus).